The primary structure comprises 369 residues: LIM homeobox transcription factor 1-beta (369 aa).

2 LIM zinc-binding domains span residues 23-73 and 82-135; these read CEGC…CKQD and CSGC…CKGD. The disordered stretch occupies residues 143 to 196; the sequence is LSSVSPDESDSVKSEDEDGDMKPAKGQGSQSKGGGDDGKDPRRPKRPRTILTTQ. The segment at residues 186–245 is a DNA-binding region (homeobox); that stretch reads PKRPRTILTTQQRRAFKASFEVSSKPCRKVRETLAAETGLSVRVVQVWFQNQRAKMKKLA.

As to quaternary structure, interacts with DHX9.

It is found in the nucleus. Its function is as follows. Transcription factor involved in the regulation of podocyte-expressed genes. Essential for the specification of dorsal limb fate at both the zeugopodal and autopodal levels. The chain is LIM homeobox transcription factor 1-beta (LMX1B) from Mesocricetus auratus (Golden hamster).